Here is a 260-residue protein sequence, read N- to C-terminus: Mediator of RNA polymerase II transcription subunit 8 (260 aa).

Belongs to the Mediator complex subunit 8 family. In terms of assembly, component of the Mediator complex.

Its subcellular location is the nucleus. Functionally, component of the Mediator complex, a coactivator involved in the regulated transcription of nearly all RNA polymerase II-dependent genes. Mediator functions as a bridge to convey information from gene-specific regulatory proteins to the basal RNA polymerase II transcription machinery. Mediator is recruited to promoters by direct interactions with regulatory proteins and serves as a scaffold for the assembly of a functional preinitiation complex with RNA polymerase II and the general transcription factors. In Emericella nidulans (strain FGSC A4 / ATCC 38163 / CBS 112.46 / NRRL 194 / M139) (Aspergillus nidulans), this protein is Mediator of RNA polymerase II transcription subunit 8 (med8).